The chain runs to 1893 residues: CDK5 regulatory subunit-associated protein 2 (1893 aa).

Residues T51–G94 are CM1 motif; interacts with the gTuRC. An interaction with NCKAP5L region spans residues R58–E196. A Phosphoserine modification is found at S547. Residues P926 to E1208 form an interaction with MAPRE1 region. Residue T1001 is modified to Phosphothreonine. Positions A1015 to D1071 are disordered. Positions S1196 to S1893 are interaction with PCNT and AKAP9. At S1238 the chain carries Phosphoserine. 2 disordered regions span residues L1347–E1381 and I1467–R1486. The segment covering G1469–R1486 has biased composition (basic and acidic residues). At S1490 the chain carries Phosphoserine. Residues S1500–N1519 show a composition bias toward basic and acidic residues. The interval S1500 to Q1521 is disordered. Phosphoserine occurs at positions 1663 and 1666. Disordered stretches follow at residues A1675–T1706 and D1752–A1774. The segment at H1726–T1768 is interaction with CDK5R1. The segment covering V1753–L1766 has biased composition (polar residues). The required for centrosomal attachment, Golgi localization and CALM1 interaction stretch occupies residues V1861–A1870. The tract at residues L1874–S1893 is disordered. The segment covering G1884–S1893 has biased composition (polar residues). Position 1893 is a phosphoserine (S1893).

In terms of assembly, homodimer. Interacts with CDK5R1 (p35 form). CDK5RAP1, CDK5RAP2 and CDK5RAP3 show competitive binding to CDK5R1. May form a complex with CDK5R1 and CDK5. Interacts with pericentrin/PCNT; the interaction is leading to centrosomal and Golgi localization of CDK5RAP2 and PCNT. Interacts with AKAP9; the interaction targets CDK5RAP2 and AKAP9 to Golgi apparatus. Interacts with MAPRE1; the interaction is direct and targets CDK5RAP2 and EB1/MAPRE1 to microtubule plus ends. Interacts with TUBG1; the interaction is leading to the centrosomal localization of CDK5RAP2 and TUBG1. Interacts with TUBGCP3. Interacts with CALM1. Interacts with CDC20. Interacts with CEP68; degradation of CEP68 in early mitosis leads to removal of CDK5RAP2 from the centrosome which promotes centriole disengagement and subsequent centriole separation. Interacts with NCKAP5L. Forms a pericentrosomal complex with AKAP9, MAPRE1 and PDE4DIP isoform 13/MMG8/SMYLE; within this complex, MAPRE1 binding to CDK5RAP2 may be mediated by PDE4DIP. Interacts with LGALS3BP; this interaction may connect the pericentrosomal complex to the gamma-tubulin ring complex (gTuRC) to promote microtubule assembly and acetylation. Interacts with CCDC66. Associates (via CM1 motif) with TUBGCP2 of the gTuRC; the interaction plays a role in gTuRC activation. Post-translationally, phosphorylated in vitro by CDK5.

It is found in the cytoplasm. It localises to the cytoskeleton. Its subcellular location is the microtubule organizing center. The protein localises to the centrosome. The protein resides in the golgi apparatus. Functionally, potential regulator of CDK5 activity via its interaction with CDK5R1. Negative regulator of centriole disengagement (licensing) which maintains centriole engagement and cohesion. Involved in regulation of mitotic spindle orientation. Plays a role in the spindle checkpoint activation by acting as a transcriptional regulator of both BUBR1 and MAD2 promoter. Together with EB1/MAPRE1, may promote microtubule polymerization, bundle formation, growth and dynamics at the plus ends. Regulates centrosomal maturation by recruitment of the gamma-tubulin ring complex (gTuRC) onto centrosomes. In complex with PDE4DIP isoform 13/MMG8/SMYLE, MAPRE1 and AKAP9, contributes to microtubules nucleation and extension from the centrosome to the cell periphery. Required for the recruitment of AKAP9 to centrosomes. Plays a role in neurogenesis. This is CDK5 regulatory subunit-associated protein 2 (CDK5RAP2) from Pan troglodytes (Chimpanzee).